A 142-amino-acid polypeptide reads, in one-letter code: MAKKVQAYVKLQVAAGMANPSPPVGPALGQQGVNIMEFCKAFNAKTDSLEKGLPIPVVITVYADRSFTFVTKTPPAAVLLKKAAGIKSGSGKPNKDKVGKISRAQLQEIAQTKAADMTGADIEAMTRSIEGTARSMGLVVED.

It belongs to the universal ribosomal protein uL11 family. Part of the ribosomal stalk of the 50S ribosomal subunit. Interacts with L10 and the large rRNA to form the base of the stalk. L10 forms an elongated spine to which L12 dimers bind in a sequential fashion forming a multimeric L10(L12)X complex. Post-translationally, one or more lysine residues are methylated.

Forms part of the ribosomal stalk which helps the ribosome interact with GTP-bound translation factors. In Klebsiella pneumoniae subsp. pneumoniae (strain ATCC 700721 / MGH 78578), this protein is Large ribosomal subunit protein uL11.